We begin with the raw amino-acid sequence, 199 residues long: Small ribosomal subunit protein eS1 (199 aa).

It belongs to the eukaryotic ribosomal protein eS1 family.

The protein is Small ribosomal subunit protein eS1 of Pyrococcus abyssi (strain GE5 / Orsay).